Here is a 448-residue protein sequence, read N- to C-terminus: Probable xyloglucan 6-xylosyltransferase 1 (448 aa).

Residues 1 to 19 (MWVAERVVGERRMREIQRF) are Cytoplasmic-facing. A helical; Signal-anchor for type II membrane protein membrane pass occupies residues 20–42 (ARNAKLTVVCLLLTVVVLRGTVG). The Lumenal portion of the chain corresponds to 43–448 (AGKFGTPQQD…AFKAMKTTST (406 aa)). The tract at residues 71–113 (HHDALSRGGGSSSSSGRAAQRDDEPDPPPRTLRDPPYTLGPKI) is disordered. Residue Asn421 is glycosylated (N-linked (GlcNAc...) asparagine).

Belongs to the glycosyltransferase 34 family.

Its subcellular location is the golgi apparatus membrane. It carries out the reaction Transfers an alpha-D-xylosyl residue from UDP-D-xylose to a glucose residue in xyloglucan, forming an alpha-(1-&gt;6)-D-xylosyl-D-glucose linkage.. Probable xyloglucan xylosyltransferase involved in the biosynthesis of xyloglucan in roots. This chain is Probable xyloglucan 6-xylosyltransferase 1, found in Oryza sativa subsp. indica (Rice).